We begin with the raw amino-acid sequence, 491 residues long: UDP-N-acetylmuramate--L-alanine ligase (491 aa).

126–132 serves as a coordination point for ATP; sequence GTHGKTT.

This sequence belongs to the MurCDEF family.

It localises to the cytoplasm. The enzyme catalyses UDP-N-acetyl-alpha-D-muramate + L-alanine + ATP = UDP-N-acetyl-alpha-D-muramoyl-L-alanine + ADP + phosphate + H(+). The protein operates within cell wall biogenesis; peptidoglycan biosynthesis. Its function is as follows. Cell wall formation. In Salmonella choleraesuis (strain SC-B67), this protein is UDP-N-acetylmuramate--L-alanine ligase.